Reading from the N-terminus, the 217-residue chain is Cytochrome c biogenesis ATP-binding export protein CcmA (217 aa).

The ABC transporter domain maps to 6–215 (FSAKNLACVR…HLDQFAVAEE (210 aa)). 38–45 (GPNGSGKS) lines the ATP pocket.

Belongs to the ABC transporter superfamily. CcmA exporter (TC 3.A.1.107) family. As to quaternary structure, the complex is composed of two ATP-binding proteins (CcmA) and two transmembrane proteins (CcmB).

It localises to the cell inner membrane. The catalysed reaction is heme b(in) + ATP + H2O = heme b(out) + ADP + phosphate + H(+). Its function is as follows. Part of the ABC transporter complex CcmAB involved in the biogenesis of c-type cytochromes; once thought to export heme, this seems not to be the case, but its exact role is uncertain. Responsible for energy coupling to the transport system. The protein is Cytochrome c biogenesis ATP-binding export protein CcmA of Paramagnetospirillum magneticum (strain ATCC 700264 / AMB-1) (Magnetospirillum magneticum).